The primary structure comprises 1020 residues: Calcium-transporting ATPase 1 (1020 aa).

Residue Met-1 is modified to N-acetylmethionine. The Stromal portion of the chain corresponds to 1–162 (MESYLNENFG…NQFTESPSRG (162 aa)). Residues 21–32 (ALQRWRKLCWIV) form an interaction with calmodulin region. Ser-46 is modified (phosphoserine; by CPK). The chain crosses the membrane as a helical span at residues 163–183 (FWLFVWEALQDTTLMILAACA). Topologically, residues 184–201 (FVSLIVGILMEGWPIGAH) are lumenal. Residues 202–222 (DGLGIVASILLVVFVTATSDY) traverse the membrane as a helical segment. The Stromal portion of the chain corresponds to 223–350 (RQSLQFKDLD…DDETPLQVKL (128 aa)). A helical transmembrane segment spans residues 351-370 (NGVATIIGKIGLFFAVITFA). Topologically, residues 371-400 (VLVQGLANQKRLDNSHWIWTADELMAMLEY) are lumenal. A helical transmembrane segment spans residues 401-418 (FAVAVTIVVVAVPEGLPL). Residues 419–813 (AVTLSLAFAM…KWGRSVYINI (395 aa)) are Stromal-facing. Asp-456 (4-aspartylphosphate intermediate) is an active-site residue. Mg(2+)-binding residues include Asp-758 and Asp-762. A helical transmembrane segment spans residues 814 to 832 (QKFVQFQLTVNVVALIVNF). Topologically, residues 833–843 (LSACLTGNAPL) are lumenal. Residues 844-864 (TAVQLLWVNMIMDTLGALALA) form a helical membrane-spanning segment. Over 865-884 (TEPPQDDLMKRSPVGRKGNF) the chain is Stromal. A helical transmembrane segment spans residues 885–907 (ISNVMWRNILGQSLYQLVIIWCL). Over 908 to 919 (QTKGKTMFGLDG) the chain is Lumenal. A helical membrane pass occupies residues 920–941 (PDSDLTLNTLIFNIFVFCQVFN). Topologically, residues 942-959 (EISSREMEKIDVFKGILK) are stromal. The helical transmembrane segment at 960–981 (NYVFVAVLTCTVVFQVIIIELL) threads the bilayer. The Lumenal segment spans residues 982–991 (GTFADTTPLN). The helical transmembrane segment at 992 to 1013 (LGQWLVSIILGFLGMPVAAALK) threads the bilayer. Topologically, residues 1014–1020 (MIPVGSH) are stromal.

This sequence belongs to the cation transport ATPase (P-type) (TC 3.A.3) family. Type IIB subfamily. In terms of tissue distribution, expressed at higher levels in roots than in leaves.

Its subcellular location is the plastid. The protein resides in the chloroplast inner membrane. It catalyses the reaction Ca(2+)(in) + ATP + H2O = Ca(2+)(out) + ADP + phosphate + H(+). With respect to regulation, activated by calmodulin. In terms of biological role, this magnesium-dependent enzyme catalyzes the hydrolysis of ATP coupled with the translocation of calcium from the cytosol out of the cell or into organelles. This chain is Calcium-transporting ATPase 1 (ACA1), found in Arabidopsis thaliana (Mouse-ear cress).